We begin with the raw amino-acid sequence, 235 residues long: Small ribosomal subunit protein uS2c (235 aa).

Belongs to the universal ribosomal protein uS2 family.

It localises to the plastid. Its subcellular location is the chloroplast. This chain is Small ribosomal subunit protein uS2c (rps2), found in Huperzia lucidula (Shining clubmoss).